A 92-amino-acid polypeptide reads, in one-letter code: Small ribosomal subunit protein uS19 (92 aa).

This sequence belongs to the universal ribosomal protein uS19 family.

Protein S19 forms a complex with S13 that binds strongly to the 16S ribosomal RNA. In Dinoroseobacter shibae (strain DSM 16493 / NCIMB 14021 / DFL 12), this protein is Small ribosomal subunit protein uS19.